We begin with the raw amino-acid sequence, 479 residues long: Sodium-coupled neutral amino acid transporter 5 (479 aa).

Residues 1 to 61 (MAISCAVGME…LDFEGKTSFG (61 aa)) are Cytoplasmic-facing. Residues 62–84 (MSVFNLSNAIMGSGILGLAYAMA) form a helical membrane-spanning segment. The Extracellular segment spans residues 85-97 (HTGVIFFLALLLC). The chain crosses the membrane as a helical span at residues 98 to 118 (IALLSSYSIHLLLTCASVVGI). The Cytoplasmic segment spans residues 119 to 135 (RAYEQLGQRAFGPAGKV). The helical transmembrane segment at 136-156 (VVAIIICLHNVGAMSSYLFII) threads the bilayer. The Extracellular portion of the chain corresponds to 157 to 176 (KSELPLVIGTFLHMDPEGDW). A helical transmembrane segment spans residues 177 to 197 (FLKGNLLIILVSLLIILPLAL). Residues 198-202 (MKHLG) lie on the Cytoplasmic side of the membrane. Residues 203–223 (YLGYTSSLSLTCMLFFLISVI) traverse the membrane as a helical segment. Residues 224–264 (YKKFQIGCDVSHNDTVVEAEQAPLQAFNSSCEAELFTVDSQ) lie on the Extracellular side of the membrane. Cys231 and Cys254 are joined by a disulfide. Asn236 is a glycosylation site (N-linked (GlcNAc...) asparagine). The helical transmembrane segment at 265–285 (MSYTVPIMAFAFVCHPEVLPI) threads the bilayer. Topologically, residues 286 to 302 (YTELCRPTQRRMQAVAN) are cytoplasmic. The helical transmembrane segment at 303 to 323 (MSIGAMFIMYGLTATFGYLTF) threads the bilayer. Residues 324–341 (YSTVKAEMLEMYTQEDML) lie on the Extracellular side of the membrane. A helical membrane pass occupies residues 342 to 362 (ILCVRLAVLLAVTLTVPVVLF). Residues 363 to 383 (PIRRALQQLLFPSKAFSWLRH) are Cytoplasmic-facing. The helical transmembrane segment at 384–404 (VAIALILLILVNILVICVPTI) threads the bilayer. Residues 405–406 (RD) are Extracellular-facing. A helical membrane pass occupies residues 407–427 (IFGFIGSTSAPSLIFILPSVF). Topologically, residues 428–446 (YLRIVPTEVEPLFSWPKIQ) are cytoplasmic. A helical membrane pass occupies residues 447–467 (ALCFGVLGVLFMAISLGFMFA). Residues 468–479 (NWATGQSRMSGH) lie on the Extracellular side of the membrane.

Belongs to the amino acid/polyamine transporter 2 family. As to expression, expressed in the ganglion cell layer and the nerve fiber layer (at protein level). Also expreseed in the cells of the inner nuclear layer and in the inner plexiform layer (at protein level). Expressed in Mueller and ganglion retinal cell.

It is found in the cell membrane. The catalysed reaction is L-glutamine(out) + Na(+)(out) + H(+)(in) = L-glutamine(in) + Na(+)(in) + H(+)(out). It catalyses the reaction L-serine(out) + Na(+)(out) + H(+)(in) = L-serine(in) + Na(+)(in) + H(+)(out). The enzyme catalyses L-alanine(out) + Na(+)(out) + H(+)(in) = L-alanine(in) + Na(+)(in) + H(+)(out). It carries out the reaction glycine(out) + Na(+)(out) + H(+)(in) = glycine(in) + Na(+)(in) + H(+)(out). The catalysed reaction is L-asparagine(out) + Na(+)(out) + H(+)(in) = L-asparagine(in) + Na(+)(in) + H(+)(out). It catalyses the reaction L-histidine(out) + Na(+)(out) + H(+)(in) = L-histidine(in) + Na(+)(in) + H(+)(out). The enzyme catalyses L-cysteine(out) + Na(+)(out) + H(+)(in) = L-cysteine(in) + Na(+)(in) + H(+)(out). With respect to regulation, not inhibited by lithium. Partial allosteric regulation on ions sodium binding. Its function is as follows. Symporter that cotransports neutral amino acids and sodium ions, coupled to an H(+) antiporter activity. Releases L-glutamine and glycine from astroglial cells and may participate in the glutamate/GABA-L-glutamine cycle and the NMDA receptors activation. In addition, contributes significantly to L-glutamine uptake in retina, namely in ganglion and Mueller cells therefore, participates in the retinal glutamate-glutamine cycle. The transport activity is pH sensitive, Li(+) tolerant, bidirectional and associated with large uncoupled fluxes of protons. Moreover functions in both direction and is associated with large uncoupled fluxes of protons. The transport is electroneutral coupled to the cotransport of 1 Na(+) and the antiport of 1 H(+). May have a particular importance for modulation of net hepatic glutamine flux. The chain is Sodium-coupled neutral amino acid transporter 5 from Mus musculus (Mouse).